Reading from the N-terminus, the 1371-residue chain is F-actin-uncapping protein LRRC16A (1371 aa).

N-acetylmethionine is present on Met-1. Phosphoserine is present on Ser-122. LRR repeat units follow at residues 245–269 (SNRLEELVLENAGLRTDFAQKLASA), 275–298 (NSGLHTINLAGNPLEDRGVSSLSI), 304–327 (PKGLKHLNLSKTSLSPKGVNSLSQ), 336–363 (ASTLVHLDLSGNVLRGDDLSHMYNFLAQ), 391–418 (LQYLAVLNLSRTVFSHRKGKEVPPSFKQ), 423–447 (SLALMHINLSGTKLSPEPLKALLLG), 481–506 (IHNITSLDISDNGLESDLSTLIVWLS), 543–566 (ESPLQSLSLADSKLKTEVTIIINA), 570–593 (NTSLTKVDISGNGMGDMGAKMLAK), and 654–678 (LQKIENYLLRNHETRKYLQEQAYRL). A coiled-coil region spans residues 710 to 734 (GDAIQEDLKSAERLMRDAKNSKTLL). Thr-916 bears the Phosphothreonine mark. Disordered stretches follow at residues 957-1000 (PFPS…QPTQ), 1036-1159 (KMDS…RRYG), and 1172-1371 (KAKQ…FIFV). The LRR 11 repeat unit spans residues 958-981 (FPSLRQEKRSSGFISELPSEEGKK). The inhibits capping activity of CAPZA2 stretch occupies residues 958-1082 (FPSLRQEKRS…LIKSRSKSER (125 aa)). Ser-968 is modified (phosphoserine). Basic and acidic residues-rich tracts occupy residues 977–986 (EEGKKLEHFT) and 1036–1061 (KMDSKKWSTRGSESHELNEGGDEKKK). Positions 1055-1089 (GGDEKKKRDSRKSSGFLNLIKSRSKSERPPTILMT) are necessary for localization at the cell membrane. Phosphoserine is present on residues Ser-1067 and Ser-1094. Basic and acidic residues-rich tracts occupy residues 1106–1130 (CPRKDTKAAEHNGNSERIEEIKTPD) and 1139–1148 (EIGKVERSDS). Polar residues predominate over residues 1190 to 1199 (AVSQDSSSPA). A Phosphothreonine modification is found at Thr-1228. Over residues 1231–1243 (KNTKAEPKAEAGS) the composition is skewed to basic and acidic residues. Residues 1244 to 1265 (RSRSSSSTPTSPKPLLQSPKPS) show a composition bias toward low complexity. Phosphoserine occurs at positions 1280, 1288, 1291, 1315, 1324, and 1331. Residues 1313–1326 (QSSPQPSPRTFSQE) show a composition bias toward polar residues. The segment covering 1340-1353 (QEQKQRSSSKDGHQ) has biased composition (basic and acidic residues). At Ser-1360 the chain carries Phosphoserine.

Belongs to the CARMIL family. As to quaternary structure, homodimer. Interacts (via C-terminus) with heterodimer capping protein (CP); this interaction uncaps barbed ends capped by CP, enhances barbed-end actin polymerization and promotes lamellipodial formation and cell migration. Interacts with heterodimer capping protein (CP). Interacts with MYO1E. Interacts with TRIO. As to expression, expressed in lung, placenta, small intestine, liver, thymus, colon, skeletal muscle, heart and brain. Higher expression in kidney.

Its subcellular location is the cytoplasm. It localises to the cytoskeleton. The protein resides in the cell membrane. It is found in the cell projection. The protein localises to the lamellipodium. Cell membrane-cytoskeleton-associated protein that plays a role in the regulation of actin polymerization at the barbed end of actin filaments. Prevents F-actin heterodimeric capping protein (CP) activity at the leading edges of migrating cells, and hence generates uncapped barbed ends and enhances actin polymerization, however, seems unable to nucleate filaments. Plays a role in lamellipodial protrusion formations and cell migration. This is F-actin-uncapping protein LRRC16A from Homo sapiens (Human).